Reading from the N-terminus, the 350-residue chain is Sterol-4-alpha-carboxylate 3-dehydrogenase ERG26, decarboxylating (350 aa).

Residues 12-18 (GGSGFLG), 63-64 (DL), and 85-87 (SAS) contribute to the NADP(+) site. Substrate contacts are provided by Ser125 and Tyr152. NADP(+) is bound by residues Tyr152, Lys156, and 179–182 (PAGI). Lys156 functions as the Proton donor in the catalytic mechanism.

The protein belongs to the 3-beta-HSD family. Heterotetramer of ERG25, ERG26, ERG27 and ERG28. ERG28 acts as a scaffold to tether ERG27 and other 4,4-demethylation-related enzymes, forming a demethylation enzyme complex, in the endoplasmic reticulum.

Its subcellular location is the endoplasmic reticulum membrane. The enzyme catalyses 4beta-methylzymosterol-4alpha-carboxylate + NADP(+) = 3-dehydro-4-methylzymosterol + CO2 + NADPH. The protein operates within steroid biosynthesis; zymosterol biosynthesis; zymosterol from lanosterol: step 4/6. Sterol-4-alpha-carboxylate 3-dehydrogenase; part of the third module of ergosterol biosynthesis pathway that includes the late steps of the pathway. ERG26 is a catalytic component of the C-4 demethylation complex that catalyzes the oxidative decarboxylation that results in a reduction of the 3-beta-hydroxy group at the C-3 carbon to an oxo group. The third module or late pathway involves the ergosterol synthesis itself through consecutive reactions that mainly occur in the endoplasmic reticulum (ER) membrane. Firstly, the squalene synthase ERG9 catalyzes the condensation of 2 farnesyl pyrophosphate moieties to form squalene, which is the precursor of all steroids. Squalene synthase is crucial for balancing the incorporation of farnesyl diphosphate (FPP) into sterol and nonsterol isoprene synthesis. Secondly, the squalene epoxidase ERG1 catalyzes the stereospecific oxidation of squalene to (S)-2,3-epoxysqualene, which is considered to be a rate-limiting enzyme in steroid biosynthesis. Then, the lanosterol synthase ERG7 catalyzes the cyclization of (S)-2,3 oxidosqualene to lanosterol, a reaction that forms the sterol core. In the next steps, lanosterol is transformed to zymosterol through a complex process involving various demethylation, reduction and desaturation reactions. The lanosterol 14-alpha-demethylase ERG11 (also known as CYP51) catalyzes C14-demethylation of lanosterol to produce 4,4'-dimethyl cholesta-8,14,24-triene-3-beta-ol, which is critical for ergosterol biosynthesis. The C-14 reductase ERG24 reduces the C14=C15 double bond of 4,4-dimethyl-cholesta-8,14,24-trienol to produce 4,4-dimethyl-cholesta-8,24-dienol. 4,4-dimethyl-cholesta-8,24-dienol is substrate of the C-4 demethylation complex ERG25-ERG26-ERG27 in which ERG25 catalyzes the three-step monooxygenation required for the demethylation of 4,4-dimethyl and 4alpha-methylsterols, ERG26 catalyzes the oxidative decarboxylation that results in a reduction of the 3-beta-hydroxy group at the C-3 carbon to an oxo group, and ERG27 is responsible for the reduction of the keto group on the C-3. ERG28 has a role as a scaffold to help anchor ERG25, ERG26 and ERG27 to the endoplasmic reticulum and ERG29 regulates the activity of the iron-containing C4-methylsterol oxidase ERG25. Then, the sterol 24-C-methyltransferase ERG6 catalyzes the methyl transfer from S-adenosyl-methionine to the C-24 of zymosterol to form fecosterol. The C-8 sterol isomerase ERG2 catalyzes the reaction which results in unsaturation at C-7 in the B ring of sterols and thus converts fecosterol to episterol. The sterol-C5-desaturase ERG3 then catalyzes the introduction of a C-5 double bond in the B ring to produce 5-dehydroepisterol. The C-22 sterol desaturase ERG5 further converts 5-dehydroepisterol into ergosta-5,7,22,24(28)-tetraen-3beta-ol by forming the C-22(23) double bond in the sterol side chain. Finally, ergosta-5,7,22,24(28)-tetraen-3beta-ol is substrate of the C-24(28) sterol reductase ERG4 to produce ergosterol. The polypeptide is Sterol-4-alpha-carboxylate 3-dehydrogenase ERG26, decarboxylating (Candida albicans (strain SC5314 / ATCC MYA-2876) (Yeast)).